A 460-amino-acid chain; its full sequence is Alpha-amylase (460 aa).

The signal sequence occupies residues 1-21 (MASRTLSGALALAAAATAVLA). Residues Asn121, Gln167, and Asp176 each coordinate Ca(2+). Asp206 acts as the Nucleophile in catalysis. His210 serves as a coordination point for Ca(2+). The active-site Proton donor is Glu233.

This sequence belongs to the glycosyl hydrolase 13 family. Monomer. The cofactor is Ca(2+).

The enzyme catalyses Endohydrolysis of (1-&gt;4)-alpha-D-glucosidic linkages in polysaccharides containing three or more (1-&gt;4)-alpha-linked D-glucose units.. In Streptomyces thermoviolaceus, this protein is Alpha-amylase (amy).